We begin with the raw amino-acid sequence, 343 residues long: Selenide, water dikinase (343 aa).

Sec13 is a catalytic residue. Position 13 (Sec13) is a non-standard amino acid, selenocysteine. ATP is bound by residues Lys16 and Thr44–Asp46. Asp47 contributes to the Mg(2+) binding site. Residues Asp64, Asp87, and Gly135–Thr137 each bind ATP. Asp87 provides a ligand contact to Mg(2+). Asp223 contributes to the Mg(2+) binding site.

This sequence belongs to the selenophosphate synthase 1 family. Class I subfamily. As to quaternary structure, homodimer. The cofactor is Mg(2+).

It catalyses the reaction hydrogenselenide + ATP + H2O = selenophosphate + AMP + phosphate + 2 H(+). Functionally, synthesizes selenophosphate from selenide and ATP. The sequence is that of Selenide, water dikinase from Geobacter metallireducens (strain ATCC 53774 / DSM 7210 / GS-15).